The following is a 244-amino-acid chain: MGHKVHPTGIRLGIAKDWNSKWYANKAEFASYLAADLKVREMLRKKLAQAGVSKILIERPAKTARVTIHTARPGVVIGKRGEDIEKLRKEVSELMGVPAHINVTEVRKPELDAQLVAESIAQQLERRIMFRRAMKRSVGNAMRLGALGIKVNVAGRLNGAEIARSEWYREGRVPLHTLRADIDYGFAEASTTYGIIGIKVWIYKGEVFDFSQVGQEKQDDSPRNDRNDRGDRGDRPSRPAREAR.

The KH type-2 domain maps to 39 to 107 (VREMLRKKLA…PAHINVTEVR (69 aa)). The tract at residues 213 to 244 (VGQEKQDDSPRNDRNDRGDRGDRPSRPAREAR) is disordered. The segment covering 216–244 (EKQDDSPRNDRNDRGDRGDRPSRPAREAR) has biased composition (basic and acidic residues).

It belongs to the universal ribosomal protein uS3 family. In terms of assembly, part of the 30S ribosomal subunit. Forms a tight complex with proteins S10 and S14.

In terms of biological role, binds the lower part of the 30S subunit head. Binds mRNA in the 70S ribosome, positioning it for translation. In Xanthomonas axonopodis pv. citri (strain 306), this protein is Small ribosomal subunit protein uS3.